A 489-amino-acid chain; its full sequence is Kynureninase 2 (489 aa).

The span at 1–12 shows a compositional bias: polar residues; sequence MDASAAISQLRQ. The segment at 1–25 is disordered; sequence MDASAAISQLRQGQKPEWPQNANTS. Residues L149, T150, 177–180, D261, H264, and Y286 each bind pyridoxal 5'-phosphate; that span reads FPSD. K287 is modified (N6-(pyridoxal phosphate)lysine). Positions 317 and 345 each coordinate pyridoxal 5'-phosphate.

This sequence belongs to the kynureninase family. In terms of assembly, homodimer. It depends on pyridoxal 5'-phosphate as a cofactor.

The protein localises to the cytoplasm. It carries out the reaction L-kynurenine + H2O = anthranilate + L-alanine + H(+). It catalyses the reaction 3-hydroxy-L-kynurenine + H2O = 3-hydroxyanthranilate + L-alanine + H(+). Its pathway is amino-acid degradation; L-kynurenine degradation; L-alanine and anthranilate from L-kynurenine: step 1/1. It participates in cofactor biosynthesis; NAD(+) biosynthesis; quinolinate from L-kynurenine: step 2/3. Functionally, catalyzes the cleavage of L-kynurenine (L-Kyn) and L-3-hydroxykynurenine (L-3OHKyn) into anthranilic acid (AA) and 3-hydroxyanthranilic acid (3-OHAA), respectively. In Phaeosphaeria nodorum (strain SN15 / ATCC MYA-4574 / FGSC 10173) (Glume blotch fungus), this protein is Kynureninase 2.